A 388-amino-acid chain; its full sequence is GTPase Obg (388 aa).

Residues 1–159 (MKFVDEANIR…RSIKLELLLL (159 aa)) enclose the Obg domain. The 174-residue stretch at 160-333 (ADVGLLGMPN…LSIKMLDYIR (174 aa)) folds into the OBG-type G domain. GTP-binding positions include 166 to 173 (GMPNAGKS), 191 to 195 (FTTLV), 213 to 216 (DIPG), 283 to 286 (NKTD), and 314 to 316 (SAY). Positions 173 and 193 each coordinate Mg(2+).

Belongs to the TRAFAC class OBG-HflX-like GTPase superfamily. OBG GTPase family. In terms of assembly, monomer. It depends on Mg(2+) as a cofactor.

Its subcellular location is the cytoplasm. Its function is as follows. An essential GTPase which binds GTP, GDP and possibly (p)ppGpp with moderate affinity, with high nucleotide exchange rates and a fairly low GTP hydrolysis rate. Plays a role in control of the cell cycle, stress response, ribosome biogenesis and in those bacteria that undergo differentiation, in morphogenesis control. This Shewanella frigidimarina (strain NCIMB 400) protein is GTPase Obg.